A 270-amino-acid polypeptide reads, in one-letter code: Pyrroline-5-carboxylate reductase (270 aa).

This sequence belongs to the pyrroline-5-carboxylate reductase family.

The protein localises to the cytoplasm. It catalyses the reaction L-proline + NADP(+) = (S)-1-pyrroline-5-carboxylate + NADPH + 2 H(+). The enzyme catalyses L-proline + NAD(+) = (S)-1-pyrroline-5-carboxylate + NADH + 2 H(+). Its pathway is amino-acid biosynthesis; L-proline biosynthesis; L-proline from L-glutamate 5-semialdehyde: step 1/1. In terms of biological role, catalyzes the reduction of 1-pyrroline-5-carboxylate (PCA) to L-proline. In Corynebacterium melassecola, this protein is Pyrroline-5-carboxylate reductase.